The following is a 408-amino-acid chain: Prenyltransferase criF (408 aa).

The dimethylallyl diphosphate site is built by Arg94, Lys181, Tyr183, Arg248, Lys250, Tyr252, Gln334, Tyr336, Tyr400, and Tyr404.

The protein belongs to the tryptophan dimethylallyltransferase family. In terms of assembly, homodimer.

It carries out the reaction preechinulin + dimethylallyl diphosphate = tardioxopiperazine B + diphosphate. The enzyme catalyses preechinulin + dimethylallyl diphosphate = tardioxopiperazine A + diphosphate. It catalyses the reaction tardioxopiperazine A + dimethylallyl diphosphate = echinulin + diphosphate. The catalysed reaction is tardioxopiperazine A + dimethylallyl diphosphate = variecolorin L + diphosphate. It carries out the reaction neoechinulin A + dimethylallyl diphosphate = variecolorin G + diphosphate. The enzyme catalyses neoechinulin A + dimethylallyl diphosphate = isoechinulin A + diphosphate. It catalyses the reaction isoechinulin A + dimethylallyl diphosphate = dehydroechinulin + diphosphate. The catalysed reaction is neoechinulin B + dimethylallyl diphosphate = isoechinulin B + diphosphate. It functions in the pathway secondary metabolite biosynthesis. It participates in alkaloid biosynthesis. Prenyltransferase; part of the gene cluster that mediates the biosynthesis of echinulin family alkaloid. The pathway begins with the biosynthesis of the cyclic dipeptide cyclo-L-Trp-L-Ala (cyclo-TA) by the NRPS criC via condensation of L-alanine and L-tryptophan. The prenyltransferase criA then catalyzes the first prenylation step, a reverse prenylation reaction at C2, to yield preechinulin. Preechinulin is the substrate of the cytochrome P450 monooxygenase criE that catalyzes the formation of the double bond between C10 and C11 to produce neoechulin A. The unique prenyltransferase criF functions as a competitive enzyme with criE for preechinulin metabolization and uses preechinulin for effective regiospecific prenylations. Preechinulin is prenylated by criF at C5 or C7. C7-prenylation leads to accumulation of tardioxopiperazine B without further modification by criF. In contrast, the C5-prenylated tardioxopiperazine A can be prenylated again by criF, predominantly at C7 to form echinulin or less frequently at C4 to give variecolorin L. CriF also accepts neoechilunin A to produce varlecolorin G (prenylation at C5) or isoechinulin A (prenylation at C7). CriF further converts isoechinulin A into dehydroechinulin. Moreover, a yet unidentified enzyme can also convert neoechilunin A into neoechilunin B by introducing a double bond between positions C14 and C17 and thus provides a further substrate to criF for C5 and C7 prenylation. The sequence is that of Prenyltransferase criF from Aspergillus cristatus (Chinese Fuzhuan brick tea-fermentation fungus).